The primary structure comprises 54 residues: Apelin receptor early endogenous ligand (54 aa).

Residues 1-22 (MRFQQFLFAFFIFIMSLLLISG) form the signal peptide. A glycan (N-linked (GlcNAc...) asparagine) is linked at Asn27.

It belongs to the Elabela/Toddler family. As to quaternary structure, interacts with APLNR. In terms of tissue distribution, expressed in the intima of blood vessels. Expressed in endothelial cells in blood vessels in the heart and lung. Expressed in cytotrophoblasts and syncytiotrophoblasts of first-trimester placental tissue and term placentas (at protein level). Not detected in smooth muscle cells or cardiomyocytes (at protein level). Expressed in kidney. Expressed in blood vessels. Expressed in embryonic (ESCs) and induced (iPSCs) pluripotent stem cells. Most highly expressed in undifferentiated embryonic stem cell and is rapidly down-regulated during differentiation.

The protein resides in the secreted. The protein localises to the extracellular space. Peptide hormone that functions as endogenous ligand for the G-protein-coupled apelin receptor (APLNR/APJ), that plays a role in the regulation of normal cardiovascular function and fluid homeostasis. Functions as a balanced agonist activating both G(i) protein pathway and beta-arrestin pathway of APLNR. Downstream G proteins activation, apelin can inhibit cAMP production and activate key intracellular effectors such as ERKs. On the other hand, APLNR activation induces beta-arrestin recruitment to the membrane leading to desensitization and internalization of the receptor. Required for mesendodermal differentiation, blood vessels formation and heart morphogenesis during early development and for adult cardiovascular homeostasis. Acts as a motogen by promoting mesendodermal cell migration during gastrulation by binding and activating APLNR. Acts as an early embryonic regulator of cellular movement with a role in migration and development of cardiac progenitor cells. May act as a chemoattractant for the activation of angioblast migration toward the embryonic midline, i.e. the position of the future vessel formation, during vasculogenesis. Positively regulates sinus venosus (SV)-derived endothelial cells migration into the developing heart to promote coronary blood vessel sprouting. Plays a role in placental vascular development; promotes placental trophoblast invasion and spiral artery remodeling in the uterus. Involved in the regulation of maternal cardiovascular homeostasis to prevent gestational hypertension and for potent cardioprotective functions during heart failure. Mediates myocardial contractility in an ERK1/2-dependent manner. The polypeptide is Apelin receptor early endogenous ligand (Homo sapiens (Human)).